The primary structure comprises 365 residues: Tubulin-like protein CetZ (365 aa).

Residues 10–14 (QCGTK), 103–105 (GTG), glutamate 136, asparagine 163, and asparagine 181 contribute to the GTP site.

This sequence belongs to the CetZ family.

The protein localises to the cytoplasm. Its function is as follows. Involved in cell shape control. In Pyrococcus horikoshii (strain ATCC 700860 / DSM 12428 / JCM 9974 / NBRC 100139 / OT-3), this protein is Tubulin-like protein CetZ.